Reading from the N-terminus, the 129-residue chain is Small ribosomal subunit protein uS11 (129 aa).

The protein belongs to the universal ribosomal protein uS11 family. As to quaternary structure, part of the 30S ribosomal subunit. Interacts with proteins S7 and S18. Binds to IF-3.

Its function is as follows. Located on the platform of the 30S subunit, it bridges several disparate RNA helices of the 16S rRNA. Forms part of the Shine-Dalgarno cleft in the 70S ribosome. The sequence is that of Small ribosomal subunit protein uS11 from Pseudomonas entomophila (strain L48).